A 345-amino-acid chain; its full sequence is Anthranilate phosphoribosyltransferase (345 aa).

5-phospho-alpha-D-ribose 1-diphosphate contacts are provided by residues glycine 79, 82–83 (GD), threonine 87, 89–92 (NVST), 106–114 (KHGNRAVSG), and serine 118. Position 79 (glycine 79) interacts with anthranilate. Serine 91 contributes to the Mg(2+) binding site. Asparagine 109 contacts anthranilate. Anthranilate is bound at residue arginine 164. Aspartate 223 and glutamate 224 together coordinate Mg(2+).

It belongs to the anthranilate phosphoribosyltransferase family. As to quaternary structure, homodimer. Mg(2+) is required as a cofactor.

The catalysed reaction is N-(5-phospho-beta-D-ribosyl)anthranilate + diphosphate = 5-phospho-alpha-D-ribose 1-diphosphate + anthranilate. It participates in amino-acid biosynthesis; L-tryptophan biosynthesis; L-tryptophan from chorismate: step 2/5. Its function is as follows. Catalyzes the transfer of the phosphoribosyl group of 5-phosphorylribose-1-pyrophosphate (PRPP) to anthranilate to yield N-(5'-phosphoribosyl)-anthranilate (PRA). The chain is Anthranilate phosphoribosyltransferase from Saccharolobus islandicus (strain M.14.25 / Kamchatka #1) (Sulfolobus islandicus).